Here is a 166-residue protein sequence, read N- to C-terminus: 3-isopropylmalate dehydratase small subunit (166 aa).

This sequence belongs to the LeuD family. LeuD type 2 subfamily. Heterodimer of LeuC and LeuD.

It catalyses the reaction (2R,3S)-3-isopropylmalate = (2S)-2-isopropylmalate. It participates in amino-acid biosynthesis; L-leucine biosynthesis; L-leucine from 3-methyl-2-oxobutanoate: step 2/4. Functionally, catalyzes the isomerization between 2-isopropylmalate and 3-isopropylmalate, via the formation of 2-isopropylmaleate. This Aliarcobacter butzleri (strain RM4018) (Arcobacter butzleri) protein is 3-isopropylmalate dehydratase small subunit.